The primary structure comprises 2684 residues: Probable polyketide synthase 27 (2684 aa).

The Ketosynthase family 3 (KS3) domain occupies 11 to 442; it reads CGDVAIIGIG…GSNVCLILSE (432 aa). Catalysis depends on for beta-ketoacyl synthase activity residues cysteine 183, histidine 322, and histidine 365. The segment at 650 to 683 is acyl/malonyl transferases; the sequence is GVSADIIVGHSLGEMSSSYSSGMIDFETLCYLIY. The active-site For acyl/malonyl transferase activity is serine 660. The interval 958-1087 is N-terminal hotdog fold; it reads HEKITSEGPP…GNFSLFKHNS (130 aa). The 319-residue stretch at 958–1276 folds into the PKS/mFAS DH domain; sequence HEKITSEGPP…CTSVSLVNPR (319 aa). Catalysis depends on histidine 999, which acts as the Proton acceptor; for dehydratase activity. Residues 1104–1276 form a C-terminal hotdog fold region; that stretch reads NFTTISKQEF…CTSVSLVNPR (173 aa). Aspartate 1173 serves as the catalytic Proton donor; for dehydratase activity. Residues 1202 to 1221 are disordered; it reads IPSSSSSSKDDNDCDSNNNN. The Carrier domain occupies 2585 to 2662; that stretch reads SDNEFIHSTI…QSIDIIKFGY (78 aa). Serine 2622 carries the O-(pantetheine 4'-phosphoryl)serine modification.

The cofactor is pantetheine 4'-phosphate.

In terms of biological role, probable polyketide synthase. This chain is Probable polyketide synthase 27 (pks27), found in Dictyostelium discoideum (Social amoeba).